We begin with the raw amino-acid sequence, 609 residues long: WD repeat-containing protein 1 (609 aa).

WD repeat units follow at residues 6–47 (EIKK…IRNI), 50–89 (PAIA…IWDT), 95–137 (LLKY…LWDS), 140–178 (SVGE…FFEG), 182–220 (KFKF…IYDG), 226–265 (VCAL…IWDV), 272–308 (STFN…YLDK), 313–353 (KPLR…YWDS), 360–410 (GFSG…KMDV), 434–476 (MKDK…LYSI), 482–520 (KSDD…VFSV), 525–563 (VEHN…VWTV), and 568–606 (TRIK…EWSI).

The protein belongs to the WD repeat AIP1 family.

The protein localises to the cytoplasm. It is found in the cytoskeleton. Functionally, induces disassembly of actin filaments in conjunction with ADF/cofilin family proteins. Enhances cofilin-mediated actin severing. This is WD repeat-containing protein 1 (WDR1) from Gallus gallus (Chicken).